Consider the following 395-residue polypeptide: Acetylornithine aminotransferase (395 aa).

Residues 117–118 (GA) and Phe-144 contribute to the pyridoxal 5'-phosphate site. Arg-147 is a binding site for N(2)-acetyl-L-ornithine. 230-233 (DEVQ) provides a ligand contact to pyridoxal 5'-phosphate. Residue Lys-259 is modified to N6-(pyridoxal phosphate)lysine. A N(2)-acetyl-L-ornithine-binding site is contributed by Ser-285. Thr-286 lines the pyridoxal 5'-phosphate pocket.

This sequence belongs to the class-III pyridoxal-phosphate-dependent aminotransferase family. ArgD subfamily. Homodimer. The cofactor is pyridoxal 5'-phosphate.

The protein resides in the cytoplasm. The catalysed reaction is N(2)-acetyl-L-ornithine + 2-oxoglutarate = N-acetyl-L-glutamate 5-semialdehyde + L-glutamate. Its pathway is amino-acid biosynthesis; L-arginine biosynthesis; N(2)-acetyl-L-ornithine from L-glutamate: step 4/4. The chain is Acetylornithine aminotransferase from Methanosarcina mazei (strain ATCC BAA-159 / DSM 3647 / Goe1 / Go1 / JCM 11833 / OCM 88) (Methanosarcina frisia).